A 485-amino-acid chain; its full sequence is Phosphoglucosamine mutase (485 aa).

Catalysis depends on serine 133, which acts as the Phosphoserine intermediate. Mg(2+) is bound by residues serine 133, aspartate 274, aspartate 276, and aspartate 278. Serine 133 carries the phosphoserine modification.

It belongs to the phosphohexose mutase family. The cofactor is Mg(2+). Activated by phosphorylation.

The enzyme catalyses alpha-D-glucosamine 1-phosphate = D-glucosamine 6-phosphate. Catalyzes the conversion of glucosamine-6-phosphate to glucosamine-1-phosphate. The polypeptide is Phosphoglucosamine mutase (Rippkaea orientalis (strain PCC 8801 / RF-1) (Cyanothece sp. (strain PCC 8801))).